A 454-amino-acid polypeptide reads, in one-letter code: Response regulator PleD (454 aa).

2 consecutive Response regulatory domains span residues arginine 4–threonine 120 and arginine 155–isoleucine 269. Mg(2+) is bound by residues aspartate 9, aspartate 10, aspartate 53, and methionine 55. Residue aspartate 53 is modified to 4-aspartylphosphate. The GGDEF domain occupies aspartate 319 to alanine 454. Substrate contacts are provided by asparagine 335 and aspartate 344. Glutamate 370 (proton acceptor) is an active-site residue.

In terms of assembly, homodimer. Inactive monomer in solution. Post-translationally, phosphorylated by PleC and DivJ. Phosphorylation stimulates cyclase activity.

It is found in the cytoplasm. It catalyses the reaction 2 GTP = 3',3'-c-di-GMP + 2 diphosphate. It functions in the pathway purine metabolism; 3',5'-cyclic di-GMP biosynthesis. Allosterically inhibited by the product c-di-GMP. In terms of biological role, response regulator that is part of a signal transduction pathway controlling cell differentiation in the swarmer-to-stalked cell transition. Its function is as follows. Catalyzes the condensation of two GTP molecules to the cyclic dinucleotide di-GMP (c-di-GMP), which acts as a secondary messenger. This Caulobacter vibrioides (strain ATCC 19089 / CIP 103742 / CB 15) (Caulobacter crescentus) protein is Response regulator PleD (pleD).